We begin with the raw amino-acid sequence, 309 residues long: ADP-L-glycero-D-manno-heptose-6-epimerase (309 aa).

Residues 10–11, 31–32, K38, K53, 75–79, and N92 each bind NADP(+); these read FI, DN, and LGACS. Y140 (proton acceptor) is an active-site residue. K144 is a binding site for NADP(+). Residue N169 participates in substrate binding. The NADP(+) site is built by V170 and K178. Catalysis depends on K178, which acts as the Proton acceptor. Residues S180, H187, 201-204, R209, and Y272 each bind substrate; that span reads FLGS.

Belongs to the NAD(P)-dependent epimerase/dehydratase family. HldD subfamily. In terms of assembly, homopentamer. NADP(+) is required as a cofactor.

It carries out the reaction ADP-D-glycero-beta-D-manno-heptose = ADP-L-glycero-beta-D-manno-heptose. Its pathway is nucleotide-sugar biosynthesis; ADP-L-glycero-beta-D-manno-heptose biosynthesis; ADP-L-glycero-beta-D-manno-heptose from D-glycero-beta-D-manno-heptose 7-phosphate: step 4/4. In terms of biological role, catalyzes the interconversion between ADP-D-glycero-beta-D-manno-heptose and ADP-L-glycero-beta-D-manno-heptose via an epimerization at carbon 6 of the heptose. The sequence is that of ADP-L-glycero-D-manno-heptose-6-epimerase from Hamiltonella defensa subsp. Acyrthosiphon pisum (strain 5AT).